The chain runs to 999 residues: Hypoxia up-regulated protein 1 (999 aa).

An N-terminal signal peptide occupies residues 1–32 (MAATVRRQRPRRLLCWALVAVLLADLLALSDT). N-linked (GlcNAc...) asparagine glycosylation is found at N155, N222, and N515. Residues 564-694 (VEDSPEEEST…KKQKPARKQK (131 aa)) form a disordered region. Position 567 is a phosphoserine (S567). Residues 574–583 (LTKLGNTISS) show a composition bias toward polar residues. N596 carries an N-linked (GlcNAc...) asparagine glycan. 2 stretches are compositionally biased toward basic and acidic residues: residues 611-626 (GSKD…KEEA) and 641-668 (PKGD…KPNE). 3 N-linked (GlcNAc...) asparagine glycosylation sites follow: N830, N862, and N869. K883 carries the post-translational modification N6-acetyllysine. Residues 909 to 999 (AKFTKPRPRP…QKRPLKNDEL (91 aa)) form a disordered region. 2 N-linked (GlcNAc...) asparagine glycosylation sites follow: N922 and N931. The span at 949-962 (EEAKAILEPDKEGL) shows a compositional bias: basic and acidic residues. The short motif at 996–999 (NDEL) is the Prevents secretion from ER element.

The protein belongs to the heat shock protein 70 family. As to quaternary structure, part of a large chaperone multiprotein complex comprising DNAJB11, HSP90B1, HSPA5, HYOU, PDIA2, PDIA4, PDIA6, PPIB, SDF2L1, UGGT1 and very small amounts of ERP29, but not, or at very low levels, CALR nor CANX. In terms of tissue distribution, selectively expressed by cultured astrocytes but not endothelial cells, microglia or neurons.

It is found in the endoplasmic reticulum lumen. Functionally, has a pivotal role in cytoprotective cellular mechanisms triggered by oxygen deprivation. Promotes HSPA5/BiP-mediated ATP nucleotide exchange and thereby activates the unfolded protein response (UPR) pathway in the presence of endoplasmic reticulum stress. May play a role as a molecular chaperone and participate in protein folding. This is Hypoxia up-regulated protein 1 (Hyou1) from Rattus norvegicus (Rat).